The sequence spans 409 residues: Putative fatty acyl-CoA reductase 7 (409 aa).

It belongs to the fatty acyl-CoA reductase family.

The protein is Putative fatty acyl-CoA reductase 7 (FAR7) of Arabidopsis thaliana (Mouse-ear cress).